The chain runs to 88 residues: Small ribosomal subunit protein uS15c (88 aa).

The protein belongs to the universal ribosomal protein uS15 family. In terms of assembly, part of the 30S ribosomal subunit.

Its subcellular location is the plastid. It is found in the chloroplast. This Arabis hirsuta (Hairy rock-cress) protein is Small ribosomal subunit protein uS15c (rps15).